Here is a 239-residue protein sequence, read N- to C-terminus: UDP-2,3-diacylglucosamine hydrolase (239 aa).

Mn(2+) contacts are provided by aspartate 9, histidine 11, aspartate 42, asparagine 80, and histidine 115. Residue 80–81 (NR) coordinates substrate. 5 residues coordinate substrate: aspartate 123, serine 161, lysine 165, lysine 168, and histidine 196. Positions 196 and 198 each coordinate Mn(2+).

The protein belongs to the LpxH family. Mn(2+) is required as a cofactor.

It is found in the cell inner membrane. The catalysed reaction is UDP-2-N,3-O-bis[(3R)-3-hydroxytetradecanoyl]-alpha-D-glucosamine + H2O = 2-N,3-O-bis[(3R)-3-hydroxytetradecanoyl]-alpha-D-glucosaminyl 1-phosphate + UMP + 2 H(+). It participates in glycolipid biosynthesis; lipid IV(A) biosynthesis; lipid IV(A) from (3R)-3-hydroxytetradecanoyl-[acyl-carrier-protein] and UDP-N-acetyl-alpha-D-glucosamine: step 4/6. In terms of biological role, hydrolyzes the pyrophosphate bond of UDP-2,3-diacylglucosamine to yield 2,3-diacylglucosamine 1-phosphate (lipid X) and UMP by catalyzing the attack of water at the alpha-P atom. Involved in the biosynthesis of lipid A, a phosphorylated glycolipid that anchors the lipopolysaccharide to the outer membrane of the cell. The sequence is that of UDP-2,3-diacylglucosamine hydrolase from Pasteurella multocida (strain Pm70).